A 743-amino-acid chain; its full sequence is Elongation factor 2 (743 aa).

Residues 19–265 (NNIRNIGIIA…MVVRHLPSPK (247 aa)) enclose the tr-type G domain. GTP contacts are provided by residues 28–35 (AHIHHGKT), 94–98 (DTPGH), and 148–151 (NKVD). The residue at position 615 (histidine 615) is a Diphthamide.

Belongs to the TRAFAC class translation factor GTPase superfamily. Classic translation factor GTPase family. EF-G/EF-2 subfamily.

Its subcellular location is the cytoplasm. In terms of biological role, catalyzes the GTP-dependent ribosomal translocation step during translation elongation. During this step, the ribosome changes from the pre-translocational (PRE) to the post-translocational (POST) state as the newly formed A-site-bound peptidyl-tRNA and P-site-bound deacylated tRNA move to the P and E sites, respectively. Catalyzes the coordinated movement of the two tRNA molecules, the mRNA and conformational changes in the ribosome. In Nanoarchaeum equitans (strain Kin4-M), this protein is Elongation factor 2.